The sequence spans 695 residues: Pre-mRNA-splicing factor clf-1 (695 aa).

HAT repeat units follow at residues 52-84, 86-118, 120-152, 154-185, 187-218, 220-259, 261-295, 305-337, 339-373, 383-419, 421-452, 454-486, 488-522, 524-555, 578-616, and 621-654; these read EYQG…WELE, KEFA…AEIK, RNIN…VMEM, GDIP…LEKR, GEFD…FEEE, GTSD…YEAR, REYE…FEKQ, VILT…LEES, GDVD…LFLF, KDIG…FEIR, GQLT…LEQK, YEFE…LERG, DDLE…FEEE, GEYE…FEIN, EAKA…FEKT, and EDIE…YIFP.

This sequence belongs to the crooked-neck family. Associated with the spliceosome.

It is found in the nucleus. Its function is as follows. Involved in pre-mRNA splicing and cell cycle progression. Required for the spliceosome assembly and initiation of the DNA replication. The polypeptide is Pre-mRNA-splicing factor clf-1 (clf-1) (Neurospora crassa (strain ATCC 24698 / 74-OR23-1A / CBS 708.71 / DSM 1257 / FGSC 987)).